Here is a 205-residue protein sequence, read N- to C-terminus: MYRIKDEWGEFLVRLARRAVEEYVRHKRVIEPPEDTPTELWEKMGVFVTLNRHNVPPQMALRGCIGFPLPIYPLVEATIKAAIYAAVDDPRFPPVQPEELDELTVEVSVLTPPELVEGPPEGRPKKIKVGRDGLLIEKGIYSGLLLPQVPVEWGWDEEEFLAQTCWKAGLPPDCWLDPDTKVYRFTAEIFEEEYPRGPVRRKPLV.

An AMMECR1 domain is found at 7–201 (EWGEFLVRLA…EEYPRGPVRR (195 aa)).

This Thermococcus kodakarensis (strain ATCC BAA-918 / JCM 12380 / KOD1) (Pyrococcus kodakaraensis (strain KOD1)) protein is Protein TK0174.